A 194-amino-acid polypeptide reads, in one-letter code: Adapter protein MecA 2 (194 aa).

This sequence belongs to the MecA family. As to quaternary structure, homodimer.

Enables the recognition and targeting of unfolded and aggregated proteins to the ClpC protease or to other proteins involved in proteolysis. Also involved in Spx degradation by ClpC. Acts negatively in the development of competence by binding ComK and recruiting it to the ClpCP protease. When overexpressed, inhibits sporulation. This Bacillus subtilis (strain 168) protein is Adapter protein MecA 2 (mecB).